We begin with the raw amino-acid sequence, 303 residues long: Bifunctional protein FolD (303 aa).

NADP(+) contacts are provided by residues 168 to 170 (GRS), Thr197, and Val238.

The protein belongs to the tetrahydrofolate dehydrogenase/cyclohydrolase family. As to quaternary structure, homodimer.

The enzyme catalyses (6R)-5,10-methylene-5,6,7,8-tetrahydrofolate + NADP(+) = (6R)-5,10-methenyltetrahydrofolate + NADPH. It carries out the reaction (6R)-5,10-methenyltetrahydrofolate + H2O = (6R)-10-formyltetrahydrofolate + H(+). It participates in one-carbon metabolism; tetrahydrofolate interconversion. Catalyzes the oxidation of 5,10-methylenetetrahydrofolate to 5,10-methenyltetrahydrofolate and then the hydrolysis of 5,10-methenyltetrahydrofolate to 10-formyltetrahydrofolate. In Desulfosudis oleivorans (strain DSM 6200 / JCM 39069 / Hxd3) (Desulfococcus oleovorans), this protein is Bifunctional protein FolD.